A 319-amino-acid chain; its full sequence is Tyrosine--tRNA ligase (319 aa).

Tyrosine 40 lines the L-tyrosine pocket. Residues 45–53 (PSGRIHMGH) carry the 'HIGH' region motif. Tyrosine 159, glutamine 163, aspartate 166, and glutamine 181 together coordinate L-tyrosine. Positions 216–220 (KMSSS) match the 'KMSKS' region motif. Serine 219 contacts ATP.

This sequence belongs to the class-I aminoacyl-tRNA synthetase family. TyrS type 3 subfamily. Homodimer.

It is found in the cytoplasm. The catalysed reaction is tRNA(Tyr) + L-tyrosine + ATP = L-tyrosyl-tRNA(Tyr) + AMP + diphosphate + H(+). Its function is as follows. Catalyzes the attachment of tyrosine to tRNA(Tyr) in a two-step reaction: tyrosine is first activated by ATP to form Tyr-AMP and then transferred to the acceptor end of tRNA(Tyr). The protein is Tyrosine--tRNA ligase of Methanococcus maripaludis (strain DSM 14266 / JCM 13030 / NBRC 101832 / S2 / LL).